A 329-amino-acid polypeptide reads, in one-letter code: DNA-directed RNA polymerase subunit alpha (329 aa).

Positions 1–234 (MSGSVTEFLK…EQLDAFVELR (234 aa)) are alpha N-terminal domain (alpha-NTD). The alpha C-terminal domain (alpha-CTD) stretch occupies residues 248–329 (FDPILLRPVD…WPPESIAEKD (82 aa)).

This sequence belongs to the RNA polymerase alpha chain family. As to quaternary structure, homodimer. The RNAP catalytic core consists of 2 alpha, 1 beta, 1 beta' and 1 omega subunit. When a sigma factor is associated with the core the holoenzyme is formed, which can initiate transcription.

It carries out the reaction RNA(n) + a ribonucleoside 5'-triphosphate = RNA(n+1) + diphosphate. In terms of biological role, DNA-dependent RNA polymerase catalyzes the transcription of DNA into RNA using the four ribonucleoside triphosphates as substrates. The protein is DNA-directed RNA polymerase subunit alpha of Pseudoalteromonas atlantica (strain T6c / ATCC BAA-1087).